Reading from the N-terminus, the 202-residue chain is Superoxide dismutase [Mn/Fe] (202 aa).

Residues histidine 27, histidine 81, aspartate 163, and histidine 167 each coordinate Fe(3+). Residues histidine 27, histidine 81, aspartate 163, and histidine 167 each contribute to the Mn(2+) site.

This sequence belongs to the iron/manganese superoxide dismutase family. The cofactor is Mn(2+). Fe(3+) is required as a cofactor.

The enzyme catalyses 2 superoxide + 2 H(+) = H2O2 + O2. Functionally, destroys superoxide anion radicals which are normally produced within the cells and which are toxic to biological systems. Catalyzes the dismutation of superoxide anion radicals into O2 and H2O2 by successive reduction and oxidation of the transition metal ion at the active site. The polypeptide is Superoxide dismutase [Mn/Fe] (sodA) (Streptococcus agalactiae serotype V (strain ATCC BAA-611 / 2603 V/R)).